The primary structure comprises 157 residues: Protein E6 (157 aa).

Zinc fingers lie at residues 39 to 75 (CNFC…CRSC) and 112 to 148 (CQTC…CRQC).

Belongs to the papillomaviridae E6 protein family. As to quaternary structure, forms homodimers. Interacts with ubiquitin-protein ligase UBE3A/E6-AP; this interaction stimulates UBE3A ubiquitin activity. Interacts with host BAK1.

It is found in the host cytoplasm. Its subcellular location is the host nucleus. Its function is as follows. Plays a major role in the induction and maintenance of cellular transformation. E6 associates with host UBE3A/E6-AP ubiquitin-protein ligase and modulates its activity. Protects host keratinocytes from apoptosis by mediating the degradation of host BAK1. May also inhibit host immune response. This chain is Protein E6, found in Homo sapiens (Human).